Consider the following 417-residue polypeptide: Magnesium-protoporphyrin IX monomethyl ester [oxidative] cyclase, chloroplastic (417 aa).

Residues 1-45 (MASAMELSLLNPAMHHYGIAAKTASHLPVVPARRASSGAVRFRVR) constitute a chloroplast transit peptide.

The protein belongs to the AcsF family. Fe cation is required as a cofactor.

It is found in the plastid. It localises to the chloroplast membrane. It catalyses the reaction Mg-protoporphyrin IX 13-monomethyl ester + 3 NADPH + 3 O2 + 2 H(+) = 3,8-divinyl protochlorophyllide a + 3 NADP(+) + 5 H2O. The protein operates within porphyrin-containing compound metabolism; chlorophyll biosynthesis. Its function is as follows. Catalyzes the formation of the isocyclic ring in chlorophyll biosynthesis. Mediates the cyclase reaction, which results in the formation of divinylprotochlorophyllide (Pchlide) characteristic of all chlorophylls from magnesium-protoporphyrin IX 13-monomethyl ester (MgPMME). The polypeptide is Magnesium-protoporphyrin IX monomethyl ester [oxidative] cyclase, chloroplastic (CRD1) (Hordeum vulgare (Barley)).